The primary structure comprises 90 residues: uncharacterized protein (90 aa).

Residues 53-90 (WRARPDANDADTTSSSSSSETCTESDDSSDVPPARYAV) are disordered. Residues 63-74 (DTTSSSSSSETC) are compositionally biased toward low complexity.

This is an uncharacterized protein from Orgyia pseudotsugata (Douglas-fir tussock moth).